The primary structure comprises 562 residues: Sesquiterpene synthase (562 aa).

Asp315, Asp319, and Glu467 together coordinate Mg(2+). Residues 315 to 319 (DDIYD) carry the DDXXD motif motif.

This sequence belongs to the terpene synthase family. Tpsa subfamily. Mg(2+) serves as cofactor. Mn(2+) is required as a cofactor.

Functionally, catalyzes the formation of beta-elemol, guaiol and bulnesol. In Santalum spicatum (Australian sandalwood), this protein is Sesquiterpene synthase.